A 231-amino-acid chain; its full sequence is CD302 antigen (231 aa).

A signal peptide spans 1–21 (MSAAVVATLPTLLLLLGLAAA). Residues 22 to 169 (DCPSSSWVQF…YEKKYLPDHH (148 aa)) lie on the Extracellular side of the membrane. Residues 31–153 (FQSNCYIFLQ…CEVSSVEGAL (123 aa)) enclose the C-type lectin domain. An N-linked (GlcNAc...) asparagine glycan is attached at asparagine 110. Cysteine 129 and cysteine 144 are joined by a disulfide. The helical transmembrane segment at 170 to 190 (ILITALVIASTTILTITGAVV) threads the bilayer. Topologically, residues 191-231 (WFLYKRNLTSGLTNTAYTTAPQLPYNDDCILVDAEENEYVA) are cytoplasmic.

The protein localises to the membrane. It localises to the cell projection. It is found in the filopodium. Its subcellular location is the cytoplasm. The protein resides in the cell cortex. The protein localises to the microvillus. Its function is as follows. Potential multifunctional C-type lectin receptor that may play roles in endocytosis and phagocytosis as well as in cell adhesion and migration. This is CD302 antigen from Trichosurus vulpecula (Brush-tailed possum).